The chain runs to 500 residues: Glutamyl-tRNA(Gln) amidotransferase subunit A (500 aa).

Active-site charge relay system residues include Lys81 and Ser161. Residue Ser185 is the Acyl-ester intermediate of the active site.

This sequence belongs to the amidase family. GatA subfamily. As to quaternary structure, heterotrimer of A, B and C subunits.

It catalyses the reaction L-glutamyl-tRNA(Gln) + L-glutamine + ATP + H2O = L-glutaminyl-tRNA(Gln) + L-glutamate + ADP + phosphate + H(+). In terms of biological role, allows the formation of correctly charged Gln-tRNA(Gln) through the transamidation of misacylated Glu-tRNA(Gln) in organisms which lack glutaminyl-tRNA synthetase. The reaction takes place in the presence of glutamine and ATP through an activated gamma-phospho-Glu-tRNA(Gln). The polypeptide is Glutamyl-tRNA(Gln) amidotransferase subunit A (Rhodospirillum rubrum (strain ATCC 11170 / ATH 1.1.1 / DSM 467 / LMG 4362 / NCIMB 8255 / S1)).